The following is a 539-amino-acid chain: G protein-coupled receptor associated sorting protein 3 (539 aa).

A compositionally biased stretch (basic residues) spans 1–10; sequence MTGSKNKARA. 2 disordered regions span residues 1–112 and 134–172; these read MTGS…NWFW and VAKCENKPSTSIQARAEEPAPRTSHKSRSGAEEEEEENV. Basic and acidic residues-rich tracts occupy residues 66–80 and 88–106; these read VVAETKEGARPESKA and FNHRTENKFARSTRKDKPS. Residues 134–146 are compositionally biased toward polar residues; the sequence is VAKCENKPSTSIQ.

Belongs to the GPRASP family. In terms of assembly, homodimer.

The protein localises to the cytoplasm. It localises to the nucleus. In terms of biological role, survival and differentiation promoting protein that plays a role in the regulation of neurosynaptogenesis. Induces phosphatase PP2A activity which results in APP dephosphorylation and inhibits BACE1-mediated processing of APP. This chain is G protein-coupled receptor associated sorting protein 3 (Gprasp3), found in Mus musculus (Mouse).